Consider the following 79-residue polypeptide: Keratin-associated protein 21-1 (79 aa).

As to quaternary structure, interacts with hair keratins.

In terms of biological role, in the hair cortex, hair keratin intermediate filaments are embedded in an interfilamentous matrix, consisting of hair keratin-associated proteins (KRTAP), which are essential for the formation of a rigid and resistant hair shaft through their extensive disulfide bond cross-linking with abundant cysteine residues of hair keratins. The matrix proteins include the high-sulfur and high-glycine-tyrosine keratins. This chain is Keratin-associated protein 21-1 (KRTAP21-1), found in Homo sapiens (Human).